The primary structure comprises 161 residues: 6,7-dimethyl-8-ribityllumazine synthase (161 aa).

5-amino-6-(D-ribitylamino)uracil-binding positions include Trp26, 58-60 (SFE), and 81-83 (VVI). 86-87 (GT) contacts (2S)-2-hydroxy-3-oxobutyl phosphate. His89 (proton donor) is an active-site residue. Phe114 contacts 5-amino-6-(D-ribitylamino)uracil. Residue Arg128 participates in (2S)-2-hydroxy-3-oxobutyl phosphate binding.

It belongs to the DMRL synthase family.

It catalyses the reaction (2S)-2-hydroxy-3-oxobutyl phosphate + 5-amino-6-(D-ribitylamino)uracil = 6,7-dimethyl-8-(1-D-ribityl)lumazine + phosphate + 2 H2O + H(+). Its pathway is cofactor biosynthesis; riboflavin biosynthesis; riboflavin from 2-hydroxy-3-oxobutyl phosphate and 5-amino-6-(D-ribitylamino)uracil: step 1/2. Its function is as follows. Catalyzes the formation of 6,7-dimethyl-8-ribityllumazine by condensation of 5-amino-6-(D-ribitylamino)uracil with 3,4-dihydroxy-2-butanone 4-phosphate. This is the penultimate step in the biosynthesis of riboflavin. The sequence is that of 6,7-dimethyl-8-ribityllumazine synthase from Streptomyces avermitilis (strain ATCC 31267 / DSM 46492 / JCM 5070 / NBRC 14893 / NCIMB 12804 / NRRL 8165 / MA-4680).